Reading from the N-terminus, the 571-residue chain is Streptolysin O (571 aa).

Residues 1–33 (MSNKKTFKKYSRVAGLLTAALIIGNLVTANAES) form the signal peptide. Residues 30-108 (NAESNKQNTA…KKSEEDHTEE (79 aa)) form a disordered region. Low complexity predominate over residues 37–48 (NTASTETTTTNE). 2 stretches are compositionally biased toward basic and acidic residues: residues 50 to 68 (PKPE…KTDD) and 79 to 108 (APKE…HTEE). The next 4 beta stranded transmembrane spans lie at 260–273 (KSQI…NSKI), 280–289 (IDFKSISKGE), 358–367 (SNDVEAAFSA), and 375–387 (KTNG…LENS). The short motif at 529–539 (ECTGLAWEWWR) is the Conserved undecapeptide element. The Cholesterol binding motif lies at 561–562 (TL).

This sequence belongs to the cholesterol-dependent cytolysin family. As to quaternary structure, homooligomeric pore complex of 35 to 50 subunits; when inserted in the host membrane.

The protein resides in the secreted. Its subcellular location is the host cell membrane. In terms of biological role, a cholesterol-dependent toxin that causes cytolysis by forming pores in cholesterol containing host membranes. After binding to target membranes, the protein undergoes a major conformation change, leading to its insertion in the host membrane and formation of an oligomeric pore complex. Cholesterol is required for binding to host membranes, membrane insertion and pore formation; cholesterol binding is mediated by a Thr-Leu pair in the C-terminus. Can be reversibly inactivated by oxidation. This Streptococcus pyogenes serotype M18 (strain MGAS8232) protein is Streptolysin O (slo).